The sequence spans 179 residues: Peptidyl-prolyl cis-trans isomerase H (179 aa).

Positions 16–178 constitute a PPIase cyclophilin-type domain; that stretch reads FFDISIGDTP…LQVRIAECGE (163 aa).

Belongs to the cyclophilin-type PPIase family. PPIase H subfamily.

The protein localises to the nucleus. It carries out the reaction [protein]-peptidylproline (omega=180) = [protein]-peptidylproline (omega=0). Functionally, PPIases accelerate the folding of proteins. It catalyzes the cis-trans isomerization of proline imidic peptide bonds in oligopeptides. This is Peptidyl-prolyl cis-trans isomerase H (CYP3) from Cryptococcus neoformans var. neoformans serotype D (strain B-3501A) (Filobasidiella neoformans).